A 96-amino-acid polypeptide reads, in one-letter code: Small ribosomal subunit protein bS6 (96 aa).

Belongs to the bacterial ribosomal protein bS6 family.

Its function is as follows. Binds together with bS18 to 16S ribosomal RNA. In Streptomyces coelicolor (strain ATCC BAA-471 / A3(2) / M145), this protein is Small ribosomal subunit protein bS6 (rpsF).